Reading from the N-terminus, the 333-residue chain is Fructose-1,6-bisphosphatase class 1 (333 aa).

Mg(2+) is bound by residues E92, D113, L115, and D116. Substrate is bound by residues 116-119 (DGSS), N209, Y242, and K272. Position 278 (E278) interacts with Mg(2+).

This sequence belongs to the FBPase class 1 family. As to quaternary structure, homotetramer. It depends on Mg(2+) as a cofactor.

It localises to the cytoplasm. It carries out the reaction beta-D-fructose 1,6-bisphosphate + H2O = beta-D-fructose 6-phosphate + phosphate. It participates in carbohydrate biosynthesis; Calvin cycle. The polypeptide is Fructose-1,6-bisphosphatase class 1 (Chlorobium phaeovibrioides (strain DSM 265 / 1930) (Prosthecochloris vibrioformis (strain DSM 265))).